Consider the following 507-residue polypeptide: MTLRPGQMTLADLRHIYQHPVKITLDESAYAPIQQSVDCVQKILAEKRTAYGINTGFGLLASTRIATEDLENLQRSIVLSHAAGVGEPNDDAIVRLIMVLKINSLARGFSGIRLEVIQALITLVNAQVYPHIPLKGSVGASGDLAPLAHMSLLLLGEGKARYQGEWLDARAALAKAGLQPLTLAAKEGLALLNGTQVSTAYALRGLFEAEDLYAAASVFGSLTVEAALGSRSPFDARIHAVRGQRGQIDAARTYRHLLGERSEVSESHRNCDKVQDPYSLRCQPQVMGACLTQMRQAAEVLAIESNAVSDNPLVFADQGDVLSGGNFHAEPVAMAADNLALALAEIGSLAERRISLLMDKHMSQLPPFLVENGGVNSGFMIAQVTAAALTSENKGLAFPSSVDSIPTSANQEDHVSMAPRAGKRLWEMAENVRGILAVEWLAACQGLDLRKGLKTSDALEPARLLLRKHVAYYEKDRFFAPDIEAASQLIALRHMNELMPAHLLPSL.

A cross-link (5-imidazolinone (Ala-Gly)) is located at residues 140–142 (ASG). S141 bears the 2,3-didehydroalanine (Ser) mark.

Belongs to the PAL/histidase family. In terms of processing, contains an active site 4-methylidene-imidazol-5-one (MIO), which is formed autocatalytically by cyclization and dehydration of residues Ala-Ser-Gly.

The protein localises to the cytoplasm. The enzyme catalyses L-histidine = trans-urocanate + NH4(+). It participates in amino-acid degradation; L-histidine degradation into L-glutamate; N-formimidoyl-L-glutamate from L-histidine: step 1/3. This Yersinia enterocolitica serotype O:8 / biotype 1B (strain NCTC 13174 / 8081) protein is Histidine ammonia-lyase.